We begin with the raw amino-acid sequence, 631 residues long: Anthrax toxin receptor-like (631 aa).

A signal peptide spans 1–27 (MGSHESLGPYFLVFLLLLLLPPPLFRA). At 28–353 (GSLRYHGPDW…TSTTCGIFRN (326 aa)) the chain is on the extracellular side. A VWFA domain is found at 76-246 (DLYFILDKSG…KALRSTIDAL (171 aa)). A divalent metal cation contacts are provided by Ser-84, Ser-86, and Thr-150. A helical membrane pass occupies residues 354-374 (WLYFVPLLLLVPLLLCCVWRL). Residues 375–631 (CRKQTVKEPP…LSLPPSEPNF (257 aa)) are Cytoplasmic-facing. A disordered region spans residues 382–413 (EPPPVQKPEKEPEQEKPPSPPPPPPPPPPPLP). Residues 388 to 397 (KPEKEPEQEK) show a composition bias toward basic and acidic residues. The segment covering 398–413 (PPSPPPPPPPPPPPLP) has biased composition (pro residues).

Belongs to the ATR family.

It localises to the membrane. The chain is Anthrax toxin receptor-like (ANTXRL) from Homo sapiens (Human).